The chain runs to 257 residues: GTP cyclohydrolase III (257 aa).

Belongs to the archaeal-type GTP cyclohydrolase family.

It catalyses the reaction GTP + 3 H2O = 2-amino-5-formylamino-6-(5-phospho-D-ribosylamino)pyrimidin-4(3H)-one + 2 phosphate + 2 H(+). Its function is as follows. Catalyzes the formation of 2-amino-5-formylamino-6-ribofuranosylamino-4(3H)-pyrimidinone ribonucleotide monophosphate and inorganic phosphate from GTP. Also has an independent pyrophosphate phosphohydrolase activity. In Halorubrum lacusprofundi (strain ATCC 49239 / DSM 5036 / JCM 8891 / ACAM 34), this protein is GTP cyclohydrolase III.